Reading from the N-terminus, the 337-residue chain is UDP-3-O-acylglucosamine N-acyltransferase (337 aa).

H238 functions as the Proton acceptor in the catalytic mechanism.

The protein belongs to the transferase hexapeptide repeat family. LpxD subfamily. In terms of assembly, homotrimer.

It catalyses the reaction a UDP-3-O-[(3R)-3-hydroxyacyl]-alpha-D-glucosamine + a (3R)-hydroxyacyl-[ACP] = a UDP-2-N,3-O-bis[(3R)-3-hydroxyacyl]-alpha-D-glucosamine + holo-[ACP] + H(+). It participates in bacterial outer membrane biogenesis; LPS lipid A biosynthesis. Catalyzes the N-acylation of UDP-3-O-acylglucosamine using 3-hydroxyacyl-ACP as the acyl donor. Is involved in the biosynthesis of lipid A, a phosphorylated glycolipid that anchors the lipopolysaccharide to the outer membrane of the cell. The chain is UDP-3-O-acylglucosamine N-acyltransferase from Xanthomonas oryzae pv. oryzae (strain MAFF 311018).